The following is a 625-amino-acid chain: Interferon-induced GTP-binding protein Mx2 (625 aa).

Residues aspartate 29–proline 302 form the Dynamin-type G domain. Positions glycine 39–serine 46 are G1 motif. Position 39 to 46 (glycine 39 to serine 46) interacts with GTP. A G2 motif region spans residues valine 64–arginine 66. The segment at aspartate 140–glycine 143 is G3 motif. GTP contacts are provided by residues aspartate 140–isoleucine 144 and threonine 209–aspartate 212. The tract at residues threonine 209 to aspartate 212 is G4 motif. Positions arginine 241–glycine 244 are G5 motif. A GED domain is found at arginine 539–phenylalanine 625.

This sequence belongs to the TRAFAC class dynamin-like GTPase superfamily. Dynamin/Fzo/YdjA family.

Its subcellular location is the cytoplasm. This Ictalurus punctatus (Channel catfish) protein is Interferon-induced GTP-binding protein Mx2 (mx2).